A 476-amino-acid chain; its full sequence is Aspartyl/glutamyl-tRNA(Asn/Gln) amidotransferase subunit B (476 aa).

It belongs to the GatB/GatE family. GatB subfamily. As to quaternary structure, heterotrimer of A, B and C subunits.

The enzyme catalyses L-glutamyl-tRNA(Gln) + L-glutamine + ATP + H2O = L-glutaminyl-tRNA(Gln) + L-glutamate + ADP + phosphate + H(+). It carries out the reaction L-aspartyl-tRNA(Asn) + L-glutamine + ATP + H2O = L-asparaginyl-tRNA(Asn) + L-glutamate + ADP + phosphate + 2 H(+). Allows the formation of correctly charged Asn-tRNA(Asn) or Gln-tRNA(Gln) through the transamidation of misacylated Asp-tRNA(Asn) or Glu-tRNA(Gln) in organisms which lack either or both of asparaginyl-tRNA or glutaminyl-tRNA synthetases. The reaction takes place in the presence of glutamine and ATP through an activated phospho-Asp-tRNA(Asn) or phospho-Glu-tRNA(Gln). This is Aspartyl/glutamyl-tRNA(Asn/Gln) amidotransferase subunit B from Albidiferax ferrireducens (strain ATCC BAA-621 / DSM 15236 / T118) (Rhodoferax ferrireducens).